A 397-amino-acid chain; its full sequence is MNYAYPDEKGHYGIYGGRYVPETLMQSVLELEEAYKEAMQDEAFQKELNHYLKTYIGRETPLYYAENMTKYCGGAKIYLKREDLNHTGAHKINNTIGQALLAVRMGKKKVVAETGAGQHGVATATVCALLGLECVIFMGEEDVRRQKLNVFRMELLGAKVESVAAGSGTLKDAVNEALRYWVSHVHDTHYIMGSVLGPHPFPQIVRDFQSVIGNETKKQYEALEGKLPEAVVACIGGGSNAMGMFYPFVHDEEVALYGVEAAGKGVHTEKHAATLTKGSVGVLHGSMMYLLQNEEGQIQEAHSISAGLDYPGVGPEHSLLKDIGRVSYHSITDEEALEAFQLLTKKEGIIPALESSHAVAYALKLAPQMKKDEGLVICLSGRGDKDVESIKRYMEEV.

Lys-91 is subject to N6-(pyridoxal phosphate)lysine.

Belongs to the TrpB family. As to quaternary structure, tetramer of two alpha and two beta chains. It depends on pyridoxal 5'-phosphate as a cofactor.

It carries out the reaction (1S,2R)-1-C-(indol-3-yl)glycerol 3-phosphate + L-serine = D-glyceraldehyde 3-phosphate + L-tryptophan + H2O. Its pathway is amino-acid biosynthesis; L-tryptophan biosynthesis; L-tryptophan from chorismate: step 5/5. Its function is as follows. The beta subunit is responsible for the synthesis of L-tryptophan from indole and L-serine. The protein is Tryptophan synthase beta chain of Bacillus cereus (strain ATCC 14579 / DSM 31 / CCUG 7414 / JCM 2152 / NBRC 15305 / NCIMB 9373 / NCTC 2599 / NRRL B-3711).